An 81-amino-acid chain; its full sequence is Large ribosomal subunit protein bL31 (81 aa).

Zn(2+) is bound by residues cysteine 16, cysteine 18, cysteine 38, and cysteine 41.

It belongs to the bacterial ribosomal protein bL31 family. Type A subfamily. Part of the 50S ribosomal subunit. Zn(2+) serves as cofactor.

Its function is as follows. Binds the 23S rRNA. The polypeptide is Large ribosomal subunit protein bL31 (Mycobacterium sp. (strain JLS)).